The chain runs to 444 residues: Putative zinc metalloprotease PD_0327 (444 aa).

His-22 provides a ligand contact to Zn(2+). Residue Glu-23 is part of the active site. Zn(2+) is bound at residue His-26. The chain crosses the membrane as a helical span at residues 98–120 (IAIVAAGPLANLLLCMLLLWVLF). One can recognise a PDZ domain in the interval 192 to 278 (TLELSKLKQP…HPGMIEIRRG (87 aa)). 2 consecutive transmembrane segments (helical) span residues 371 to 393 (VGWF…LFPI) and 418 to 440 (AMAA…AFYN).

It belongs to the peptidase M50B family. The cofactor is Zn(2+).

The protein localises to the cell inner membrane. The chain is Putative zinc metalloprotease PD_0327 from Xylella fastidiosa (strain Temecula1 / ATCC 700964).